A 241-amino-acid polypeptide reads, in one-letter code: Eukaryotic translation initiation factor 3 subunit J (241 aa).

The interval 1 to 94 (MDVSWDADNF…EKTAEEMTPE (94 aa)) is disordered. Residues 26–45 (GEDEDDNVKESWEDEEEEKK) are compositionally biased toward acidic residues. Positions 61–118 (KKKIHDKIAERERQEREKAERLVTEKTAEEMTPEQKLAEKLRQQKLQEESDLRLAMET) form a coiled coil. Over residues 66–89 (DKIAERERQEREKAERLVTEKTAE) the composition is skewed to basic and acidic residues.

It belongs to the eIF-3 subunit J family. Component of the eukaryotic translation initiation factor 3 (eIF-3) complex.

It localises to the cytoplasm. Functionally, component of the eukaryotic translation initiation factor 3 (eIF-3) complex, which is involved in protein synthesis of a specialized repertoire of mRNAs and, together with other initiation factors, stimulates binding of mRNA and methionyl-tRNAi to the 40S ribosome. The eIF-3 complex specifically targets and initiates translation of a subset of mRNAs involved in cell proliferation. The protein is Eukaryotic translation initiation factor 3 subunit J of Bombyx mori (Silk moth).